Consider the following 264-residue polypeptide: ATP synthase subunit a (264 aa).

Helical transmembrane passes span 29–49, 89–109, 134–154, 177–197, 208–228, and 235–255; these read TWHI…LWLF, VIAP…FMDM, DLNI…YYSI, IPVN…SLAL, LIFI…ALGV, and LIFH…LTIV.

It belongs to the ATPase A chain family. In terms of assembly, F-type ATPases have 2 components, CF(1) - the catalytic core - and CF(0) - the membrane proton channel. CF(1) has five subunits: alpha(3), beta(3), gamma(1), delta(1), epsilon(1). CF(0) has three main subunits: a(1), b(2) and c(9-12). The alpha and beta chains form an alternating ring which encloses part of the gamma chain. CF(1) is attached to CF(0) by a central stalk formed by the gamma and epsilon chains, while a peripheral stalk is formed by the delta and b chains.

Its subcellular location is the cell inner membrane. Key component of the proton channel; it plays a direct role in the translocation of protons across the membrane. This chain is ATP synthase subunit a, found in Shewanella sediminis (strain HAW-EB3).